A 304-amino-acid chain; its full sequence is Acetylglutamate kinase (304 aa).

Substrate contacts are provided by residues 75–76 (GG), Arg-97, and Asn-202.

This sequence belongs to the acetylglutamate kinase family. ArgB subfamily.

The protein resides in the cytoplasm. It carries out the reaction N-acetyl-L-glutamate + ATP = N-acetyl-L-glutamyl 5-phosphate + ADP. The protein operates within amino-acid biosynthesis; L-arginine biosynthesis; N(2)-acetyl-L-ornithine from L-glutamate: step 2/4. Catalyzes the ATP-dependent phosphorylation of N-acetyl-L-glutamate. The sequence is that of Acetylglutamate kinase from Parvibaculum lavamentivorans (strain DS-1 / DSM 13023 / NCIMB 13966).